The following is a 2200-amino-acid chain: MIQFRNKNNSMNRIARHLRNVARRKGSSLLLFLMLSTVLVAAKEDDPARLVVRPDSSTVVDESKISFFCRADGNPLPSVIWRVNGKSITDHNRISIKSLATGLSTLRFERVSLDDNATVVSCSADNGVANPVVAEASLTVVPRDKVPIGFPQIELHPSLKSVEQGKTAYVSCRVRGDPRAKVLWLRDLIPLDIRADGRYSVSTIGNPGALMIQHAREEDQGKYECIARNTLGVAHSKAANLYVKVRRVPPYFSYKLERQYVVGVGGNINLTCVAVGYPMPRVFWKKTDLMVLDDPSTAPIGKNVLTLTHVESTENFTCVAVSALGNIEATTTVIAKELPPPPVNIVVSSVTSESVVITWKPPKYNEAINKYVVNYRLKYSEGRSSRGKTMETLENSLVIDGLVAFQTYEFTVRSAGPVGVGLESLPVEAQTKPSKPATAPVSPQARSLNRDSILVKWGPCEQPNGLITGYKVYYTNDLVTTPIREWKQHDAKSDEFMTTINGLEPDSRYFVRVIAQNSEGDSPLSTLVTVATRQGIPGQPPMLTVKALDSRRMQLTWDKPLYSSPVVGYTVRYNTSDGEKELTLTSPHEKHVVTGLHPDKYYYFRVAAYSDRGQGEFTEPMISKTIASIPLSSPTIVSAAATSSKSVEIRWKGPEQKKLNGVLTAYRINYFRLEDSKTANLESVEYDEDMDDSSSFLDRMSVVVPSDATSYVLSDLLPYSSYEITVAASTMDGYGPESSIRVVKTLEDVPSAPRNFNAELTSATSVKLTWDAPAAANGALLGYYVYLDRMVNGEPVVEKGSKKRIVMIRDSSKRYFELDSLDPNTEYSFRLNAFNRNGDGEFSERKSIITQGIPPEAPEIVSVSLDRDEPPVVARIEWKMPKMKPNETPIEKYNLWLRAQGYPDSYVKAKTVDGTDLSTTISGLWMGVVYDVLLAAENREGRSQNATETIATPVGSPDGEPIDVQYEVMKGKIVVSWRPPSEEKRNGNITSYKAILSAMDATADRYEQPVPAPSTSSTFEVNVRRAYLFKVAAATMKGIGPYSPVLTINPDPAALVGPPTNVRVEATSNSTAVVQWDFESQKADSFVVKYMHEPGNRMDTEKWKQLPVVSIDKENPKRFAVVSDLNAHKPYAFCVLAVKNNLTLNEQFNKVRVTNYMTNFQRQGPCSDPPTVLESVTPTYMVQNLRVLWKTSNSVQLTWEYNGPRNVGFYVNHTGRKDYVNHELQEKTMSTPGFGQDVDEKHREYLWTNLRPHMMYTIHVGVRTLPPGARKYWPQEVVTITDPTGPPFVDVPKLVDSSGTQPGQQMIRLTPATEEYGPISHYWIILVPANYSTEDVVNLDPIELEKATAEKRAQLARSLSVSPSKKLKRKASEVGDDSQSASYHPKEKRARRATVPGAYVTARLSADRVKQQYRNNQPFIVGDSQLYDGFTNYPLEHNLHYRLMMRAFAKNDVRTKDSFEQRAPMSEKLSRMYSDSVLTEPFTIKSALRGASQKSSPWVGACIAFLVLFSIVGMLICWWLRCNKKSAGRHPRHGSITKVALTGNIMNGGGGIPGETSKLLSTSNEYGRQIMNPYEQMNGNHHMESSMDLYPLPTSHSRSNGYAPVPVAIPSLPNNGNNMTTVSHPAVPIAELANHIERLRMNNNAGFQSEFESIETGQHFTWEHSSADMNKHKNRYANVAAYDHSRVVLSNVEGYPGMDYINANYVDGYDKPRSYIATQGPLPETFSDFWRMVWEEQSVTIVMLTNLEERSRVKCDQYWPSRGTATYGDIEVTLLESVHLAHYTMRTMRLKMVGEPEVREIKHLQYTAWPDHGVPDHPTPFLIFLKRVKTLNPNDAGPIISHCSAGIGRTGAFIVIDCMLERLRYDNTVDIYGCVTALRAQRSYMVQTEEQYIFIHDAVLDAVNSGSTEVPASRLHQHLHILSQPSADQLSGIDMEFRHLTTLKWTSNRCTVANLPVNRPKNRMLSAVPYDSNRVIMRLLPGADGSDYINASWIDGYKERGAYIATQAPTNETAADFWRAIWEHNSPIIAMLVRTNERGQEQCSDYWPLETGVQVGMLVVEPMAEYDMKHYHLREFRISDINTREVRTVRQFHFMEWPDVGKPHTADHFLDFVTQVHNTYAQFGCTGPITVHCCSGAGRTAVFIALSIILDRMRAEHVVDVFTTVKLLRTERQNMIQEPEQYHFLYLAAYEYLAAYDNFS.

Residues 1–42 form the signal peptide; that stretch reads MIQFRNKNNSMNRIARHLRNVARRKGSSLLLFLMLSTVLVAA. N-linked (GlcNAc...) asparagine glycans are attached at residues Asn-8 and Asn-116. The Extracellular portion of the chain corresponds to 43 to 1497; the sequence is KEDDPARLVV…LRGASQKSSP (1455 aa). Ig-like C2-type domains follow at residues 47–139, 151–240, and 250–334; these read PARL…ASLT, PQIE…KAAN, and PYFS…TTVI. 2 disulfides stabilise this stretch: Cys-69-Cys-122 and Cys-172-Cys-225. Residues Asn-269 and Asn-315 are each glycosylated (N-linked (GlcNAc...) asparagine). Cys-272 and Cys-318 form a disulfide bridge. 9 Fibronectin type-III domains span residues 341 to 434, 439 to 535, 539 to 628, 633 to 748, 752 to 856, 857 to 956, 957 to 1053, 1058 to 1158, and 1181 to 1287; these read PPVN…TKPS, APVS…TRQG, QPPM…TIAS, SPTI…TLED, APRN…IPPE, APEI…PVGS, PDGE…PDPA, PPTN…NYMT, and MVQN…TGPP. Asn-574 carries N-linked (GlcNAc...) asparagine glycosylation. N-linked (GlcNAc...) asparagine glycosylation is found at Asn-945, Asn-988, Asn-1069, Asn-1141, Asn-1212, and Asn-1330. Positions 1355-1392 are disordered; that stretch reads LARSLSVSPSKKLKRKASEVGDDSQSASYHPKEKRARR. The helical transmembrane segment at 1498-1518 threads the bilayer; it reads WVGACIAFLVLFSIVGMLICW. Over 1519 to 2200 the chain is Cytoplasmic; the sequence is WLRCNKKSAG…EYLAAYDNFS (682 aa). Tyrosine-protein phosphatase domains lie at 1647-1902 and 1933-2192; these read FQSE…VLDA and IDME…AYEY. Substrate is bound by residues Asp-1811, 1843–1849, and Gln-1887; that span reads CSAGIGR. The Phosphocysteine intermediate role is filled by Cys-1843. The active-site Phosphocysteine intermediate is the Cys-2133.

The protein belongs to the protein-tyrosine phosphatase family. Receptor class 2A subfamily. As to expression, both isoforms are ubiquitously expressed in early embryos. In later embryos, larvae and adults expression is highest in the nerve ring, dorsal cord, ventral cord and epithelial tissues.

The protein resides in the cell junction. It is found in the adherens junction. The protein localises to the cell membrane. The catalysed reaction is O-phospho-L-tyrosyl-[protein] + H2O = L-tyrosyl-[protein] + phosphate. Has a role in early neural and epidermal development; neuroblast movements during closure of the gastrulation cleft and epidermal morphogenesis. Vab-1 and ptp-3 may function redundantly within the same sets of neuronal precursors. The chain is Tyrosine-protein phosphatase Lar-like (ptp-3) from Caenorhabditis elegans.